The following is a 424-amino-acid chain: Deoxyguanosinetriphosphate triphosphohydrolase-like protein (424 aa).

A compositionally biased stretch (pro residues) spans 1–10 (MEGTAPPTPY). The segment at 1–31 (MEGTAPPTPYDPASVARYAPEPDKRPGRTAF) is disordered. The span at 20–31 (PEPDKRPGRTAF) shows a compositional bias: basic and acidic residues. One can recognise an HD domain in the interval 70-220 (RLTHSLECAQ…MDWADDVAYS (151 aa)).

This sequence belongs to the dGTPase family. Type 2 subfamily.

This chain is Deoxyguanosinetriphosphate triphosphohydrolase-like protein, found in Streptomyces coelicolor (strain ATCC BAA-471 / A3(2) / M145).